The primary structure comprises 174 residues: Cytoglobin-1 (174 aa).

The Globin domain occupies 15 to 165 (SLTEEDVCVI…LYWQMNRVYA (151 aa)). Residues His-78 and His-110 each contribute to the heme b site.

It belongs to the globin family. In terms of assembly, monomeric. As to expression, expressed in all tissues examined with highest levels in brain, eye, gut and heart.

It is found in the cytoplasm. It localises to the nucleus. The catalysed reaction is Fe(II)-heme b-[protein] + nitric oxide + O2 = Fe(III)-heme b-[protein] + nitrate. It catalyses the reaction Fe(III)-heme b-[protein] + nitric oxide + H2O = Fe(II)-heme b-[protein] + nitrite + 2 H(+). It carries out the reaction 2 superoxide + 2 H(+) = H2O2 + O2. The enzyme catalyses H2O2 + AH2 = A + 2 H2O. Probable multifunctional globin with a hexacoordinated heme iron required for the catalysis of various reactions depending on redox condition of the cell as well as oxygen availability. Has a nitric oxide dioxygenase (NOD) activity and is most probably involved in cell-mediated and oxygen-dependent nitric oxide consumption. Under normoxic conditions functions as a nitric oxide dioxygenase (NOD) but under hypoxic conditions the globin may switch its function to that of a nitrite (NO2) reductase (NiR), generating nitric oxide. Could also have peroxidase and superoxide dismutase activities, detoxifying reactive oxygen species and protecting cells against oxidative stress. Also binds dioxygen with low affinity and could function as an oxygen sensor but has probably no function as a respiratory oxygen carrier. The chain is Cytoglobin-1 (cygb1) from Danio rerio (Zebrafish).